Here is a 216-residue protein sequence, read N- to C-terminus: Proenkephalin-A-B (216 aa).

5 consecutive propeptides follow at residues 64–85 (MDEL…LAKN), 93–131 (EYDS…GEMN), 144–155 (STDLEDETRGIQ), 165–175 (VGRPEWWQDYQ), and 183–207 (TRFT…PDME). Residues 114–133 (PESAIYHDNNSETPGEMNKR) are disordered.

The protein belongs to the opioid neuropeptide precursor family. The N-terminal domain contains 6 conserved cysteines thought to be involved in disulfide bonding and/or processing.

It localises to the secreted. Its function is as follows. Enkephalin neuropeptides compete with and mimic the effects of opiate drugs. They play a role in a number of physiologic functions, including pain perception and responses to stress. The chain is Proenkephalin-A-B (penk-b) from Xenopus laevis (African clawed frog).